The chain runs to 100 residues: Urease subunit gamma (100 aa).

It belongs to the urease gamma subunit family. In terms of assembly, heterotrimer of UreA (gamma), UreB (beta) and UreC (alpha) subunits. Three heterotrimers associate to form the active enzyme.

The protein resides in the cytoplasm. It catalyses the reaction urea + 2 H2O + H(+) = hydrogencarbonate + 2 NH4(+). It functions in the pathway nitrogen metabolism; urea degradation; CO(2) and NH(3) from urea (urease route): step 1/1. This is Urease subunit gamma from Nostoc sp. (strain PCC 7120 / SAG 25.82 / UTEX 2576).